Reading from the N-terminus, the 49-residue chain is Large ribosomal subunit protein bL33C (49 aa).

Positions 20–49 (NKNKRNNPDRLEKQKYCPRERKVTLHRETK) are disordered. The span at 25–49 (NNPDRLEKQKYCPRERKVTLHRETK) shows a compositional bias: basic and acidic residues.

It belongs to the bacterial ribosomal protein bL33 family.

This chain is Large ribosomal subunit protein bL33C (rpmG3), found in Enterococcus faecalis (strain ATCC 700802 / V583).